A 200-amino-acid chain; its full sequence is GTP cyclohydrolase-2 (200 aa).

Residue 49–53 (RIHSE) participates in GTP binding. C54, C65, and C67 together coordinate Zn(2+). Residues Q70, 92–94 (EGR), and T114 each bind GTP. D126 acts as the Proton acceptor in catalysis. The active-site Nucleophile is R128. Residues T149 and K154 each contribute to the GTP site.

This sequence belongs to the GTP cyclohydrolase II family. Zn(2+) is required as a cofactor.

The catalysed reaction is GTP + 4 H2O = 2,5-diamino-6-hydroxy-4-(5-phosphoribosylamino)-pyrimidine + formate + 2 phosphate + 3 H(+). It participates in cofactor biosynthesis; riboflavin biosynthesis; 5-amino-6-(D-ribitylamino)uracil from GTP: step 1/4. In terms of biological role, catalyzes the conversion of GTP to 2,5-diamino-6-ribosylamino-4(3H)-pyrimidinone 5'-phosphate (DARP), formate and pyrophosphate. The protein is GTP cyclohydrolase-2 of Saccharophagus degradans (strain 2-40 / ATCC 43961 / DSM 17024).